Reading from the N-terminus, the 72-residue chain is Translation initiation factor IF-1 (72 aa).

The S1-like domain maps to 1-72 (MSKDDVIEMQ…TRGRITWRAK (72 aa)).

It belongs to the IF-1 family. Component of the 30S ribosomal translation pre-initiation complex which assembles on the 30S ribosome in the order IF-2 and IF-3, IF-1 and N-formylmethionyl-tRNA(fMet); mRNA recruitment can occur at any time during PIC assembly.

The protein localises to the cytoplasm. Functionally, one of the essential components for the initiation of protein synthesis. Stabilizes the binding of IF-2 and IF-3 on the 30S subunit to which N-formylmethionyl-tRNA(fMet) subsequently binds. Helps modulate mRNA selection, yielding the 30S pre-initiation complex (PIC). Upon addition of the 50S ribosomal subunit IF-1, IF-2 and IF-3 are released leaving the mature 70S translation initiation complex. This chain is Translation initiation factor IF-1, found in Clostridium beijerinckii (strain ATCC 51743 / NCIMB 8052) (Clostridium acetobutylicum).